Here is a 321-residue protein sequence, read N- to C-terminus: NADH-ubiquinone oxidoreductase chain 1 (321 aa).

8 helical membrane-spanning segments follow: residues 9 to 29 (ITNS…LTLL), 75 to 95 (ILFT…WAPM), 106 to 126 (LGLL…LWSG), 151 to 171 (TLGL…LMLF), 177 to 197 (HMWL…STLA), 219 to 239 (VEFS…NILF), 256 to 276 (PQLF…LFLW), and 297 to 317 (YLPL…ALCG).

It belongs to the complex I subunit 1 family.

Its subcellular location is the mitochondrion inner membrane. It catalyses the reaction a ubiquinone + NADH + 5 H(+)(in) = a ubiquinol + NAD(+) + 4 H(+)(out). Core subunit of the mitochondrial membrane respiratory chain NADH dehydrogenase (Complex I) that is believed to belong to the minimal assembly required for catalysis. Complex I functions in the transfer of electrons from NADH to the respiratory chain. The immediate electron acceptor for the enzyme is believed to be ubiquinone. The protein is NADH-ubiquinone oxidoreductase chain 1 (MT-ND1) of Lycodon semicarinatus (Ryukyu odd-tooth snake).